Consider the following 283-residue polypeptide: MSELSEQCEKRLKILLTNDDGIFAPGMTLLVSNLLKADFADLYIVAPKTEQSAKSMAMTFHEPVILQPYDYPLPVAGAWSVSGTPVDCVRIALAYLFKDELPDLVLSGINRGSNAGRHVFYSGTLGAAIESTLCGVPAVALSQEGNFSFFQEKNFDIPEMLKSLSLYALSLPFAPHPVALNVNFPASNERWKGMRFVTTGPEYSCGVPHFLFCDGDSKIFKLSGGPKIVEEIPSEEWQTLRASYIAVSPVMATTSPLATFSLEEFEQLQVGFYDFANSLGMEN.

Positions 19, 20, 52, and 110 each coordinate a divalent metal cation.

It belongs to the SurE nucleotidase family. The cofactor is a divalent metal cation.

It localises to the cytoplasm. It carries out the reaction a ribonucleoside 5'-phosphate + H2O = a ribonucleoside + phosphate. Functionally, nucleotidase that shows phosphatase activity on nucleoside 5'-monophosphates. The sequence is that of 5'-nucleotidase SurE 2 from Chlamydia caviae (strain ATCC VR-813 / DSM 19441 / 03DC25 / GPIC) (Chlamydophila caviae).